Reading from the N-terminus, the 466-residue chain is Peptidoglycan-N-acetylglucosamine deacetylase PgdA (466 aa).

The Cytoplasmic portion of the chain corresponds to 1-5 (MKIRW). Residues 6 to 26 (IRLSLVAILIIAVVFIGVIGF) traverse the membrane as a helical segment. Topologically, residues 27 to 466 (QKYQFSKSRN…FDKTDSRMVK (440 aa)) are extracellular. The 175-residue stretch at 266-440 (KRIALTFDDG…KLKSQGYEFV (175 aa)) folds into the NodB homology domain. Residue Asp273 is the Proton acceptor of the active site. Zn(2+) contacts are provided by Asp274, His324, and His328. Position 365 (Tyr365) interacts with substrate. His415 (proton donor) is an active-site residue.

In terms of assembly, homodimer. Interacts (via transmembrane domain) with PbpA1 (via transmembrane domain); the interaction is important for the peptidoglycan N-deacetylase function of this protein. It depends on Zn(2+) as a cofactor.

The protein resides in the cell membrane. It localises to the secreted. Its subcellular location is the cell wall. It catalyses the reaction peptidoglycan-N-acetyl-D-glucosamine + H2O = peptidoglycan-D-glucosamine + acetate.. Its function is as follows. Catalyzes the deacetylation of N-acetylglucosamine (GlcNAc) residues in peptidoglycan (PG). Also deacetylates N-acetylated PG. Does not deacetylate N-acetylmuramic acid. Confers host lysozyme resistance. Critical for virulence and escape from innate immune response of the host. Required for intracellular survival of bacteria in macrophages of the host. Required for successful host colonization. Controls the production of inflammatory mediators in the bone marrow derived macrophages (BMMs) of the infected mouse. Suppresses Toll-like receptor 2 (TLR2)-dependent secretion of interleukin 6 (IL-6) and interferon-beta (IFN-beta) in the macrophages of the infected mouse. May decrease accessibility of pattern recognition receptors (PRRs) such as nucleotide-binding oligomerization domain protein (NOD) 1 of the host to the bacterial cell wall components. Protects cells from autolysis induced by lysozyme or by other autolysis-inducing agents. This is Peptidoglycan-N-acetylglucosamine deacetylase PgdA from Listeria monocytogenes serotype 1/2a (strain 10403S).